The chain runs to 165 residues: Protein OPG091 (165 aa).

It belongs to the orthopoxvirus OPG091 family.

The protein resides in the virion. Its subcellular location is the host cytoplasm. Functionally, contributes to virulence in host but not to replication in cell culture. The protein is Protein OPG091 (OPG091) of Cynomys gunnisoni (Gunnison's prairie dog).